The sequence spans 484 residues: MKIKIMSKTHVKPTKPVLGKKQFHLTTFDLPYLAFYYNQKFLLYKFQNLLDLEEPTFQNEVVENLKDGLGLVLEDFYQLAGKLAKDDEGVFRVEYDAEDSEINGVEFSVAHAADVTVDDLTAEDGTAKFKELVPYNGILNLEGLSRPLLAVQVTKLKDGLAMGLAFNHAVLDGTSTWHFMSSWAEICRGAQSISTQPFLDRSKARDTRVKLDLTAPKDPNETSNGEDAANPTVEPPQLVEKIFRFSDFAVHTIKSRANSVIPSDSSKPFSTFQSLTSHIWRHVTLARGLKPEDITIFTVFADCRRRVDPPMPEEYFGNLIQAIFTGTAAGLLAAHGPEFGASVIQKAIAAHDASVIDARNDEWEKSPKIFQFKDAGVNCVAVGSSPRFRVYEVDFGFGKPETVRSGSNNRFNGMMYLYQGKAGGISIDVEITLEASVMEKLVKSKEFLLSEEEEEDDGKKLTNGNGHVNGNGNGYVNGNGNGFV.

Histidine 168 serves as the catalytic Proton acceptor. Residues 211–233 (LDLTAPKDPNETSNGEDAANPTV) are disordered. Aspartate 394 acts as the Proton acceptor in catalysis. The tract at residues 452 to 484 (EEEEDDGKKLTNGNGHVNGNGNGYVNGNGNGFV) is disordered. Over residues 467–484 (HVNGNGNGYVNGNGNGFV) the composition is skewed to gly residues.

It belongs to the plant acyltransferase family. As to expression, expressed in root caps and lateral root emerging sites, in trichomes, in epidermis in stems, sepals and anther filaments, and in pollen grains and torpedo stage seeds.

The protein localises to the cytoplasm. Its subcellular location is the cytosol. In terms of biological role, required for incorporation of 9(10),16-dihydroxy-hexadecanoic acid into cutin. The protein is BAHD acyltransferase DCR (DCR) of Arabidopsis thaliana (Mouse-ear cress).